Consider the following 345-residue polypeptide: Selenide, water dikinase (345 aa).

Cys16 is a catalytic residue. Residues Lys19 and 45–47 (TSE) contribute to the ATP site. Asp48 provides a ligand contact to Mg(2+). Residues Asp65, Asp88, and 136–138 (GHT) contribute to the ATP site. Asp88 contacts Mg(2+). Asp224 provides a ligand contact to Mg(2+).

Belongs to the selenophosphate synthase 1 family. Class I subfamily. In terms of assembly, homodimer. The cofactor is Mg(2+).

The catalysed reaction is hydrogenselenide + ATP + H2O = selenophosphate + AMP + phosphate + 2 H(+). Synthesizes selenophosphate from selenide and ATP. The sequence is that of Selenide, water dikinase from Aliarcobacter butzleri (strain RM4018) (Arcobacter butzleri).